A 598-amino-acid polypeptide reads, in one-letter code: Elongation factor 4 (598 aa).

One can recognise a tr-type G domain in the interval 2 to 184 (TKIRNFSIIA…AVVDRIPPPS (183 aa)). GTP contacts are provided by residues 14–19 (DHGKST) and 131–134 (NKID).

Belongs to the TRAFAC class translation factor GTPase superfamily. Classic translation factor GTPase family. LepA subfamily.

The protein resides in the cell inner membrane. The enzyme catalyses GTP + H2O = GDP + phosphate + H(+). In terms of biological role, required for accurate and efficient protein synthesis under certain stress conditions. May act as a fidelity factor of the translation reaction, by catalyzing a one-codon backward translocation of tRNAs on improperly translocated ribosomes. Back-translocation proceeds from a post-translocation (POST) complex to a pre-translocation (PRE) complex, thus giving elongation factor G a second chance to translocate the tRNAs correctly. Binds to ribosomes in a GTP-dependent manner. This chain is Elongation factor 4, found in Syntrophobacter fumaroxidans (strain DSM 10017 / MPOB).